A 235-amino-acid chain; its full sequence is Small ribosomal subunit protein eS4 (235 aa).

The region spanning 37–100 (LPLGIIIRDI…NEAYRMLQDE (64 aa)) is the S4 RNA-binding domain.

It belongs to the eukaryotic ribosomal protein eS4 family.

This is Small ribosomal subunit protein eS4 from Methanosarcina acetivorans (strain ATCC 35395 / DSM 2834 / JCM 12185 / C2A).